A 603-amino-acid chain; its full sequence is MNSPGGRNNKKKPVTPAAETGPGPPTPPPPPAETQVLLAPPSLHKRNLYLFSYPLLAAFSLLRFLAFQLGLLFVWFCERLSRRVMADKGSTAARTAAAPAQDRPQEPEVVRSYHQQAFQYISMALRIDEEEKDQKEQAIQWYKKGIEELEKGIAVTITGKGEQYDRARRLQAKMSTNLLMAKDRLQLLAKLKADIQGQHSQMEVCSDNTNLPCRNGLLKPEKGAVPKKKDPPSISSNSYSRVKAAPKSGSLGNRIPNCTGVSSSARQAGPNAPSNRGAAGKNNTRTNKPTTPTTAVRKKDMKNLRNVDSNLANLILNEIVDSGPTVKFADIAGQDLAKQALQEIVILPSIRPELFTGLRAPARGLLLFGPPGNGKTMLAKAVAAESNATFFNISAASLTSKYVGEGEKLVRALFSVARELQPSIIFIDEVDSLLCERREGEHDASRRLKTEFLIEFDGVQSGGDDRVLVMGATNRPQELDDAVLRRFTKRVYVSLPNEETRLLLLKNLLSKQGNPLNEKELTQLSRLTEGYSGSDITALAKDAALGPIRELKPEQVKNMAASEMRNIKYSDFLSSLKKIKCSVSPSTLESYIRWNKEFGDTTV.

Residues 1-34 (MNSPGGRNNKKKPVTPAAETGPGPPTPPPPPAET) are disordered. The Cytoplasmic segment spans residues 1–54 (MNSPGGRNNKKKPVTPAAETGPGPPTPPPPPAETQVLLAPPSLHKRNLYLFSYP). Residues 22 to 32 (PGPPTPPPPPA) are compositionally biased toward pro residues. An intramembrane region (helical) is located at residues 55–75 (LLAAFSLLRFLAFQLGLLFVW). Topologically, residues 76 to 603 (FCERLSRRVM…WNKEFGDTTV (528 aa)) are cytoplasmic. Positions 113-188 (YHQQAFQYIS…LMAKDRLQLL (76 aa)) constitute an MIT domain. The segment at 216 to 294 (GLLKPEKGAV…RTNKPTTPTT (79 aa)) is disordered. Residues 219 to 231 (KPEKGAVPKKKDP) are compositionally biased toward basic and acidic residues. The segment covering 281 to 294 (KNNTRTNKPTTPTT) has biased composition (low complexity). Residue 369–376 (GPPGNGKT) participates in ATP binding.

Belongs to the AAA ATPase family. Spastin subfamily. As to quaternary structure, homohexamer. The homohexamer is stabilized by ATP-binding. The homohexamer may adopt a ring conformation through which microtubules pass prior to being severed. Interacts with microtubules.

It is found in the membrane. It localises to the cytoplasm. The protein localises to the cytoskeleton. Its subcellular location is the microtubule organizing center. The protein resides in the centrosome. It is found in the perinuclear region. It localises to the nucleus. It carries out the reaction n ATP + n H2O + a microtubule = n ADP + n phosphate + (n+1) alpha/beta tubulin heterodimers.. Functionally, ATP-dependent microtubule severing protein that specifically recognizes and cuts microtubules that are polyglutamylated. Preferentially recognizes and acts on microtubules decorated with short polyglutamate tails: severing activity increases as the number of glutamates per tubulin rises from one to eight, but decreases beyond this glutamylation threshold. Microtubule severing promotes reorganization of cellular microtubule arrays and the release of microtubules from the centrosome following nucleation. Required for membrane traffic from the endoplasmic reticulum (ER) to the Golgi and for completion of the abscission stage of cytokinesis. Also plays a role in axon growth and the formation of axonal branches. The sequence is that of Spastin from Xenopus tropicalis (Western clawed frog).